Consider the following 310-residue polypeptide: uncharacterized protein (310 aa).

Helical transmembrane passes span 10–30, 44–64, 78–98, 113–133, and 161–181; these read AVLSIGAALATMGLKLGAYAI, TVNLASAIVAFWALSLAATPA, FSSGLEGAFIFVAALGIGYSA, LGIALAIAATALNGTVAWILW, and VVVAVALIFVTGWEWLDPLIA. Over residues 285-297 the composition is skewed to basic and acidic residues; the sequence is PLEDPKSWQHPDE. Positions 285–310 are disordered; that stretch reads PLEDPKSWQHPDEFPPSAPLNRDKPN.

It belongs to the cation diffusion facilitator (CDF) transporter (TC 2.A.4) family.

It localises to the cell membrane. This is an uncharacterized protein from Synechocystis sp. (strain ATCC 27184 / PCC 6803 / Kazusa).